We begin with the raw amino-acid sequence, 245 residues long: Probable septum site-determining protein MinC (245 aa).

A compositionally biased stretch (basic and acidic residues) spans 112-132 (ARERPLESAEPVAPKKPEKPP). Residues 112 to 140 (ARERPLESAEPVAPKKPEKPPEPTVKPTR) are disordered.

The protein belongs to the MinC family. Interacts with MinD and FtsZ.

In terms of biological role, cell division inhibitor that blocks the formation of polar Z ring septums. Rapidly oscillates between the poles of the cell to destabilize FtsZ filaments that have formed before they mature into polar Z rings. Prevents FtsZ polymerization. In Pseudomonas fluorescens (strain Pf0-1), this protein is Probable septum site-determining protein MinC.